The chain runs to 439 residues: DNA damage-inducible protein 1 (439 aa).

The Ubiquitin-like domain maps to Met-1–Arg-82. Residues Arg-82 to Asp-101 are disordered. Residue Asp-220 is part of the active site. Residues Gln-333 to Ser-398 are disordered. Low complexity-rich tracts occupy residues Gly-364–Gly-375 and Pro-383–Ser-398. Residues Ser-398–Gly-438 form the UBA domain.

The protein belongs to the DDI1 family. In terms of assembly, binds ubiquitin and polyubiquitinated proteins.

Its subcellular location is the cytoplasm. Its function is as follows. Probable aspartic protease. May be involved in the regulation of exocytosis. Acts as a linker between the 19S proteasome and polyubiquitinated proteins via UBA domain interactions with ubiquitin for their subsequent degradation. Required for S-phase checkpoint control. The sequence is that of DNA damage-inducible protein 1 (ddi-1) from Neurospora crassa (strain ATCC 24698 / 74-OR23-1A / CBS 708.71 / DSM 1257 / FGSC 987).